Reading from the N-terminus, the 244-residue chain is Phosphoadenosine 5'-phosphosulfate reductase (244 aa).

The Nucleophile; cysteine thiosulfonate intermediate role is filled by C239.

This sequence belongs to the PAPS reductase family. CysH subfamily.

The protein resides in the cytoplasm. The catalysed reaction is [thioredoxin]-disulfide + sulfite + adenosine 3',5'-bisphosphate + 2 H(+) = [thioredoxin]-dithiol + 3'-phosphoadenylyl sulfate. Its pathway is sulfur metabolism; hydrogen sulfide biosynthesis; sulfite from sulfate: step 3/3. Catalyzes the formation of sulfite from phosphoadenosine 5'-phosphosulfate (PAPS) using thioredoxin as an electron donor. The polypeptide is Phosphoadenosine 5'-phosphosulfate reductase (Escherichia coli O157:H7).